A 383-amino-acid polypeptide reads, in one-letter code: Acetylornithine deacetylase (383 aa).

A Zn(2+)-binding site is contributed by histidine 80. Residue aspartate 82 is part of the active site. Aspartate 112 contacts Zn(2+). Glutamate 144 is a catalytic residue. Residues glutamate 145, glutamate 169, and histidine 355 each contribute to the Zn(2+) site.

The protein belongs to the peptidase M20A family. ArgE subfamily. In terms of assembly, homodimer. Zn(2+) serves as cofactor. Co(2+) is required as a cofactor. The cofactor is glutathione.

It is found in the cytoplasm. The enzyme catalyses N(2)-acetyl-L-ornithine + H2O = L-ornithine + acetate. It functions in the pathway amino-acid biosynthesis; L-arginine biosynthesis; L-ornithine from N(2)-acetyl-L-ornithine (linear): step 1/1. In terms of biological role, catalyzes the hydrolysis of the amide bond of N(2)-acetylated L-amino acids. Cleaves the acetyl group from N-acetyl-L-ornithine to form L-ornithine, an intermediate in L-arginine biosynthesis pathway, and a branchpoint in the synthesis of polyamines. This chain is Acetylornithine deacetylase, found in Salmonella typhimurium (strain LT2 / SGSC1412 / ATCC 700720).